Consider the following 225-residue polypeptide: Holliday junction branch migration complex subunit RuvA (225 aa).

Positions 1–68 (MIGWLQGQKV…DDGSSLFGFP (68 aa)) are domain I. The interval 69–147 (ERRERDMFRT…EFSCRDPGMS (79 aa)) is domain II. Residues 148 to 158 (LVDNGVIDSHQ) are flexible linker. The domain III stretch occupies residues 159–225 (LKDSSLHELQ…SLRWLSQEAA (67 aa)).

Belongs to the RuvA family. As to quaternary structure, homotetramer. Forms an RuvA(8)-RuvB(12)-Holliday junction (HJ) complex. HJ DNA is sandwiched between 2 RuvA tetramers; dsDNA enters through RuvA and exits via RuvB. An RuvB hexamer assembles on each DNA strand where it exits the tetramer. Each RuvB hexamer is contacted by two RuvA subunits (via domain III) on 2 adjacent RuvB subunits; this complex drives branch migration. In the full resolvosome a probable DNA-RuvA(4)-RuvB(12)-RuvC(2) complex forms which resolves the HJ.

It is found in the cytoplasm. The RuvA-RuvB-RuvC complex processes Holliday junction (HJ) DNA during genetic recombination and DNA repair, while the RuvA-RuvB complex plays an important role in the rescue of blocked DNA replication forks via replication fork reversal (RFR). RuvA specifically binds to HJ cruciform DNA, conferring on it an open structure. The RuvB hexamer acts as an ATP-dependent pump, pulling dsDNA into and through the RuvAB complex. HJ branch migration allows RuvC to scan DNA until it finds its consensus sequence, where it cleaves and resolves the cruciform DNA. This chain is Holliday junction branch migration complex subunit RuvA, found in Prochlorococcus marinus (strain MIT 9313).